Reading from the N-terminus, the 297-residue chain is Tyrosine recombinase XerD (297 aa).

Residues 1 to 86 (MNDLIEDFLH…SLRSFFHYLM (86 aa)) form the Core-binding (CB) domain. In terms of domain architecture, Tyr recombinase spans 107–291 (GLPKVLNLDD…TKLRLKDVYK (185 aa)). Catalysis depends on residues Arg147, Lys171, His243, Arg246, and His269. The active-site O-(3'-phospho-DNA)-tyrosine intermediate is the Tyr278.

The protein belongs to the 'phage' integrase family. XerD subfamily. Forms a cyclic heterotetrameric complex composed of two molecules of XerC and two molecules of XerD.

It is found in the cytoplasm. In terms of biological role, site-specific tyrosine recombinase, which acts by catalyzing the cutting and rejoining of the recombining DNA molecules. The XerC-XerD complex is essential to convert dimers of the bacterial chromosome into monomers to permit their segregation at cell division. It also contributes to the segregational stability of plasmids. This chain is Tyrosine recombinase XerD, found in Listeria monocytogenes serotype 4b (strain F2365).